The chain runs to 193 residues: Putative 3-methyladenine DNA glycosylase (193 aa).

This sequence belongs to the DNA glycosylase MPG family.

The protein is Putative 3-methyladenine DNA glycosylase of Francisella tularensis subsp. holarctica (strain FTNF002-00 / FTA).